Here is a 350-residue protein sequence, read N- to C-terminus: tRNA N6-adenosine threonylcarbamoyltransferase (350 aa).

Positions 113 and 117 each coordinate Fe cation. Substrate is bound by residues 135-139, Asp169, Gly182, Asp186, and Asn282; that span reads LVSGG. Asp310 serves as a coordination point for Fe cation.

Belongs to the KAE1 / TsaD family. Fe(2+) serves as cofactor.

It localises to the cytoplasm. The catalysed reaction is L-threonylcarbamoyladenylate + adenosine(37) in tRNA = N(6)-L-threonylcarbamoyladenosine(37) in tRNA + AMP + H(+). Its function is as follows. Required for the formation of a threonylcarbamoyl group on adenosine at position 37 (t(6)A37) in tRNAs that read codons beginning with adenine. Is involved in the transfer of the threonylcarbamoyl moiety of threonylcarbamoyl-AMP (TC-AMP) to the N6 group of A37, together with TsaE and TsaB. TsaD likely plays a direct catalytic role in this reaction. This Corynebacterium diphtheriae (strain ATCC 700971 / NCTC 13129 / Biotype gravis) protein is tRNA N6-adenosine threonylcarbamoyltransferase.